The chain runs to 202 residues: Small ribosomal subunit protein uS4c (202 aa).

The S4 RNA-binding domain maps to 90–150; sequence MRLDNVIFRL…NQRKSQAIIN (61 aa).

This sequence belongs to the universal ribosomal protein uS4 family. Part of the 30S ribosomal subunit. Contacts protein S5. The interaction surface between S4 and S5 is involved in control of translational fidelity.

The protein localises to the plastid. Its subcellular location is the chloroplast. One of the primary rRNA binding proteins, it binds directly to 16S rRNA where it nucleates assembly of the body of the 30S subunit. In terms of biological role, with S5 and S12 plays an important role in translational accuracy. The sequence is that of Small ribosomal subunit protein uS4c (rps4) from Canalohypopterygium tamariscinum (Moss).